We begin with the raw amino-acid sequence, 538 residues long: Chaperonin GroEL 1 (538 aa).

Residues 29–32 (TLGP), 86–90 (DGTTT), glycine 413, and aspartate 494 each bind ATP.

The protein belongs to the chaperonin (HSP60) family. As to quaternary structure, forms a cylinder of 14 subunits composed of two heptameric rings stacked back-to-back. Interacts with the co-chaperonin GroES.

Its subcellular location is the cytoplasm. The catalysed reaction is ATP + H2O + a folded polypeptide = ADP + phosphate + an unfolded polypeptide.. Functionally, together with its co-chaperonin GroES, plays an essential role in assisting protein folding. The GroEL-GroES system forms a nano-cage that allows encapsulation of the non-native substrate proteins and provides a physical environment optimized to promote and accelerate protein folding. The sequence is that of Chaperonin GroEL 1 from Mycobacterium avium (strain 104).